We begin with the raw amino-acid sequence, 243 residues long: MKAAYIVGTDTDVGKTFICAGLCWALKEKGYNIGYFKPVLSGAKRRGKMLIPQDTEFVVNFAKIEGDIYRLTPFIFEKPASPHIAASDENIDINVYQIKQTFEDLSQNYEFVVIEGCGGLAVPLKEEKNQFYMQYQLIKEICNNVILVTTTKLGTINHTLLTVEFAKAYGLCLKGIIVNMYKNEPDEDKVINTIAKFTNIPILAKVDFINDFPSDVDENKFKNVFKKCFDDRAIMKIMGVFEC.

Residue 12 to 17 (DVGKTF) coordinates ATP. Thr16 lines the Mg(2+) pocket. Lys37 is a catalytic residue. Ser41 contributes to the substrate binding site. Residues Asp54, 115–118 (EGCG), and 179–180 (NM) each bind ATP. Mg(2+) contacts are provided by Asp54 and Glu115.

This sequence belongs to the dethiobiotin synthetase family. Homodimer. Requires Mg(2+) as cofactor.

Its subcellular location is the cytoplasm. It carries out the reaction (7R,8S)-7,8-diammoniononanoate + CO2 + ATP = (4R,5S)-dethiobiotin + ADP + phosphate + 3 H(+). The protein operates within cofactor biosynthesis; biotin biosynthesis; biotin from 7,8-diaminononanoate: step 1/2. In terms of biological role, catalyzes a mechanistically unusual reaction, the ATP-dependent insertion of CO2 between the N7 and N8 nitrogen atoms of 7,8-diaminopelargonic acid (DAPA, also called 7,8-diammoniononanoate) to form a ureido ring. The chain is ATP-dependent dethiobiotin synthetase BioD from Caldicellulosiruptor bescii (strain ATCC BAA-1888 / DSM 6725 / KCTC 15123 / Z-1320) (Anaerocellum thermophilum).